Consider the following 254-residue polypeptide: 4-hydroxy-tetrahydrodipicolinate reductase (254 aa).

NAD(+)-binding positions include 10 to 15 (GATGKV) and 101 to 103 (GTT). Histidine 157 functions as the Proton donor/acceptor in the catalytic mechanism. Histidine 158 lines the (S)-2,3,4,5-tetrahydrodipicolinate pocket. The Proton donor role is filled by lysine 161. 167 to 168 (GT) lines the (S)-2,3,4,5-tetrahydrodipicolinate pocket.

It belongs to the DapB family.

The protein localises to the cytoplasm. The catalysed reaction is (S)-2,3,4,5-tetrahydrodipicolinate + NAD(+) + H2O = (2S,4S)-4-hydroxy-2,3,4,5-tetrahydrodipicolinate + NADH + H(+). It catalyses the reaction (S)-2,3,4,5-tetrahydrodipicolinate + NADP(+) + H2O = (2S,4S)-4-hydroxy-2,3,4,5-tetrahydrodipicolinate + NADPH + H(+). It functions in the pathway amino-acid biosynthesis; L-lysine biosynthesis via DAP pathway; (S)-tetrahydrodipicolinate from L-aspartate: step 4/4. In terms of biological role, catalyzes the conversion of 4-hydroxy-tetrahydrodipicolinate (HTPA) to tetrahydrodipicolinate. This is 4-hydroxy-tetrahydrodipicolinate reductase from Symbiobacterium thermophilum (strain DSM 24528 / JCM 14929 / IAM 14863 / T).